The chain runs to 687 residues: Guanine-nucleotide exchange factor YEL1 (687 aa).

Polar residues predominate over residues Tyr-14–Glu-27. 2 disordered regions span residues Tyr-14–Ser-35 and Ala-63–Asn-97. One can recognise an SEC7 domain in the interval Ile-57–Thr-264. Residues Thr-73–Thr-83 show a composition bias toward low complexity. Thr-290 bears the Phosphothreonine mark. Phosphoserine occurs at positions 293 and 299. The PH domain maps to Ala-412–Ile-551.

This sequence belongs to the YEL1 family.

Its subcellular location is the cytoplasm. It localises to the cell membrane. The protein localises to the bud neck. It is found in the bud tip. In terms of biological role, guanine nucleotide exchange factor for ARF3 required for localization of ARF3 to the bud neck and tip and involved in actin patch polarization. The protein is Guanine-nucleotide exchange factor YEL1 (YEL1) of Saccharomyces cerevisiae (strain RM11-1a) (Baker's yeast).